Here is a 556-residue protein sequence, read N- to C-terminus: MSVQTVSIQPFGDQKPGTSGLRKKVKIFQQENYTESFLTSIFLSIPEGAQDAFLVIGGDGRYYNSDVIQKIAKIGAAYGVKKLIVGQNGILSTPAASNLIRKRKATGGILLTASHNPGGPDNDFGIKYNLTNGAPAPEQVTNKIYEVSKSLTSYKYIDLPEVDTTTVGTRSYGPLEVEVVHSTEDYVSMMKEIFDFDLIRSFLKKHPDFKVLFDGMHGVTGPYGIDIFVNELGLPSSSTMNCIPKPDFGGGHPDPNLVYAHELVEAVDKNGIHFGAASDGDGDRNMIYGANTFVSPGDSLAIIAHHAKLIPWFQKHGVDGLARSMPTSGAVDRVAKAQGLQSYEVPTGWKFFCNLFDNKKMSICGEESFGTGSNHIREKDGVWAIVAWLNVIAGVAEQKPNETPSIASIQAEFWETYGRTFFTRYDYENVDSDGANKLIAALSEKAVDNKSSFVGSTISGRKVVDSGNFAYTDLDGSVTKNQGLYVKFDDGSRLVVRLSGTGSSGATIRLYVEKYEGDKSKYQMATQDYLKDNVGLALELLKFKEFVGREEPDVKT.

Alpha-D-glucose 1,6-bisphosphate contacts are provided by arginine 22 and serine 114. The active-site Phosphoserine intermediate is the serine 114. Serine 114, aspartate 279, aspartate 281, and aspartate 283 together coordinate Mg(2+). Residue serine 114 is modified to Phosphoserine. Residues aspartate 283, arginine 284, threonine 347, glutamate 366, serine 368, and lysine 379 each contribute to the alpha-D-glucose 1,6-bisphosphate site.

The protein belongs to the phosphohexose mutase family. Monomer. It depends on Mg(2+) as a cofactor.

The protein resides in the cytoplasm. It carries out the reaction alpha-D-glucose 1-phosphate = alpha-D-glucose 6-phosphate. It catalyses the reaction O-phospho-L-seryl-[protein] + alpha-D-glucose 1-phosphate = alpha-D-glucose 1,6-bisphosphate + L-seryl-[protein]. The catalysed reaction is alpha-D-glucose 1,6-bisphosphate + L-seryl-[protein] = O-phospho-L-seryl-[protein] + alpha-D-glucose 6-phosphate. Catalyzes the reversible isomerization of alpha-D-glucose 1-phosphate to alpha-D-glucose 6-phosphate. The mechanism proceeds via the intermediate compound alpha-D-glucose 1,6-bisphosphate. Key enzyme in hexose metabolism. The reverse reaction is an essential step for biosynthesis because glucose 1-phosphate is the starting point for the synthesis of UDP-glucose, which acts as a precursor for the synthesis of oligosaccharides and trehalose. This Emericella nidulans (strain FGSC A4 / ATCC 38163 / CBS 112.46 / NRRL 194 / M139) (Aspergillus nidulans) protein is Phosphoglucomutase (pgmB).